The following is a 154-amino-acid chain: D-aminoacyl-tRNA deacylase (154 aa).

The Gly-cisPro motif, important for rejection of L-amino acids signature appears at 142 to 143 (GP).

This sequence belongs to the DTD family. Homodimer.

The protein localises to the cytoplasm. The enzyme catalyses glycyl-tRNA(Ala) + H2O = tRNA(Ala) + glycine + H(+). It catalyses the reaction a D-aminoacyl-tRNA + H2O = a tRNA + a D-alpha-amino acid + H(+). Its function is as follows. An aminoacyl-tRNA editing enzyme that deacylates mischarged D-aminoacyl-tRNAs. Also deacylates mischarged glycyl-tRNA(Ala), protecting cells against glycine mischarging by AlaRS. Acts via tRNA-based rather than protein-based catalysis; rejects L-amino acids rather than detecting D-amino acids in the active site. By recycling D-aminoacyl-tRNA to D-amino acids and free tRNA molecules, this enzyme counteracts the toxicity associated with the formation of D-aminoacyl-tRNA entities in vivo and helps enforce protein L-homochirality. This Acidovorax sp. (strain JS42) protein is D-aminoacyl-tRNA deacylase.